Consider the following 357-residue polypeptide: 3-isopropylmalate dehydrogenase (357 aa).

The substrate site is built by Arg-97, Arg-107, Arg-135, and Asp-224. Residues Asp-224, Asp-248, and Asp-252 each coordinate Mg(2+). 282–294 serves as a coordination point for NAD(+); that stretch reads GSAPDIAGQDKAN.

It belongs to the isocitrate and isopropylmalate dehydrogenases family. LeuB type 1 subfamily. Homodimer. Mg(2+) is required as a cofactor. Mn(2+) serves as cofactor.

The protein resides in the cytoplasm. The enzyme catalyses (2R,3S)-3-isopropylmalate + NAD(+) = 4-methyl-2-oxopentanoate + CO2 + NADH. The protein operates within amino-acid biosynthesis; L-leucine biosynthesis; L-leucine from 3-methyl-2-oxobutanoate: step 3/4. Functionally, catalyzes the oxidation of 3-carboxy-2-hydroxy-4-methylpentanoate (3-isopropylmalate) to 3-carboxy-4-methyl-2-oxopentanoate. The product decarboxylates to 4-methyl-2 oxopentanoate. This chain is 3-isopropylmalate dehydrogenase, found in Parasynechococcus marenigrum (strain WH8102).